The sequence spans 413 residues: High zinc activated nuclear receptor protein (413 aa).

Positions 11 to 86 (LGNCKICLQR…EGMKIELVQL (76 aa)) form a DNA-binding region, nuclear receptor. NR C4-type zinc fingers lie at residues 14 to 34 (CKICLQRADGIHFAVSSCRAC) and 50 to 69 (CKEKGNCTVEKSLRNLCRSC). The required for zinc-binding stretch occupies residues 101-412 (SIDPLFTPNV…TSQCIVHTKN (312 aa)). An NR LBD domain is found at 135–396 (QMTSGYAMFL…VCCKNFKEDA (262 aa)).

This sequence belongs to the nuclear hormone receptor family. In terms of tissue distribution, weakly expressed in intestinal cells in the absence of zinc supplementation. Upon zinc supplementation, accumulates in alimentary tract cells, and it is mainly expressed in the intestine.

It localises to the nucleus. The protein localises to the cytoplasm. In terms of biological role, nuclear receptor transcription factor that binds to DNA enhancer elements to promote the transcription of genes required to maintain micronutrient homeostasis. Direct binding to its ligand zinc allows for nuclear accumulation and activation, which thereby induces the transcription of genes required to promote the storage and detoxification of excess dietary zinc. This in turn, allows for internal zinc levels to be detected and regulated. The chain is High zinc activated nuclear receptor protein from Caenorhabditis elegans.